The primary structure comprises 220 residues: Glycerol-3-phosphate acyltransferase (220 aa).

The next 6 helical transmembrane spans lie at 11–31 (INVIFTLLGYLIGGIPFGYAL), 70–90 (LLILILDLFKGMFAVFLSKLF), 96–116 (LQWMVAIASILGHCYSPFLNF), 127–147 (GSVVLLIPIESLIGLMVWFFV), 153–173 (ISSLASIVGVGTATILIFFVP), and 193–213 (MVLIFIFTLIKHVGNIFNLLA).

Belongs to the PlsY family. In terms of assembly, probably interacts with PlsX.

It is found in the cell inner membrane. The enzyme catalyses an acyl phosphate + sn-glycerol 3-phosphate = a 1-acyl-sn-glycero-3-phosphate + phosphate. It participates in lipid metabolism; phospholipid metabolism. Its function is as follows. Catalyzes the transfer of an acyl group from acyl-phosphate (acyl-PO(4)) to glycerol-3-phosphate (G3P) to form lysophosphatidic acid (LPA). This enzyme utilizes acyl-phosphate as fatty acyl donor, but not acyl-CoA or acyl-ACP. The polypeptide is Glycerol-3-phosphate acyltransferase (Helicobacter acinonychis (strain Sheeba)).